Reading from the N-terminus, the 312-residue chain is DNA-directed RNA polymerase subunit alpha (312 aa).

Residues 1–226 (MIEFKKPNIT…EHFKAFESAD (226 aa)) are alpha N-terminal domain (alpha-NTD). Residues 243-312 (KEKKLEMTIE…DLGLSLRQED (70 aa)) form an alpha C-terminal domain (alpha-CTD) region.

Belongs to the RNA polymerase alpha chain family. Homodimer. The RNAP catalytic core consists of 2 alpha, 1 beta, 1 beta' and 1 omega subunit. When a sigma factor is associated with the core the holoenzyme is formed, which can initiate transcription.

The catalysed reaction is RNA(n) + a ribonucleoside 5'-triphosphate = RNA(n+1) + diphosphate. Functionally, DNA-dependent RNA polymerase catalyzes the transcription of DNA into RNA using the four ribonucleoside triphosphates as substrates. This is DNA-directed RNA polymerase subunit alpha from Lactobacillus delbrueckii subsp. bulgaricus (strain ATCC 11842 / DSM 20081 / BCRC 10696 / JCM 1002 / NBRC 13953 / NCIMB 11778 / NCTC 12712 / WDCM 00102 / Lb 14).